The primary structure comprises 361 residues: D-alanine--D-alanine ligase (361 aa).

In terms of domain architecture, ATP-grasp spans 144–350; it reads KLAAADAGLA…FMELTDRLIR (207 aa). 177–232 provides a ligand contact to ATP; that stretch reads VASLSFPMFVKPVSLGSSVGITKVNSESELAEAITHACSLDSKVLIEQAVKGREVE. Mg(2+) is bound by residues Asp303, Glu317, and Asn319.

It belongs to the D-alanine--D-alanine ligase family. Mg(2+) is required as a cofactor. It depends on Mn(2+) as a cofactor.

The protein localises to the cytoplasm. The catalysed reaction is 2 D-alanine + ATP = D-alanyl-D-alanine + ADP + phosphate + H(+). Its pathway is cell wall biogenesis; peptidoglycan biosynthesis. Functionally, cell wall formation. The polypeptide is D-alanine--D-alanine ligase (Chlorobium luteolum (strain DSM 273 / BCRC 81028 / 2530) (Pelodictyon luteolum)).